Here is a 968-residue protein sequence, read N- to C-terminus: Alanine--tRNA ligase, cytoplasmic (968 aa).

Met-1 is modified (N-acetylmethionine). Ser-3 and Ser-8 each carry phosphoserine. An N6-acetyllysine modification is found at Lys-19. ATP contacts are provided by residues Arg-77, His-95, Trp-176, and 214 to 216; that span reads IWN. Residues Asn-216 and Asp-239 each contribute to the L-alanine site. Gly-243 lines the ATP pocket. Phosphoserine occurs at positions 399 and 555. Positions 605, 609, 723, and 727 each coordinate Zn(2+). The short motif at 750–763 is the Nuclear localization signal element; sequence RRIVAVTGAEAQKA. An N6-acetyllysine modification is found at Lys-876. Lys-943 bears the N6,N6,N6-trimethyllysine; alternate mark. Lys-943 carries the N6,N6-dimethyllysine; alternate modification. Lys-943 carries the N6-methyllysine; alternate modification.

It belongs to the class-II aminoacyl-tRNA synthetase family. In terms of assembly, monomer. Interacts with ANKRD16; the interaction is direct. Requires Zn(2+) as cofactor. ISGylated. Post-translationally, methylation at 'Lys-943' by METTL21C.

The protein localises to the cytoplasm. It localises to the nucleus. The enzyme catalyses tRNA(Ala) + L-alanine + ATP = L-alanyl-tRNA(Ala) + AMP + diphosphate. The catalysed reaction is (S)-lactate + ATP + H(+) = (S)-lactoyl-AMP + diphosphate. It carries out the reaction (S)-lactoyl-AMP + L-lysyl-[protein] = N(6)-[(S)-lactoyl]-L-lysyl-[protein] + AMP + 2 H(+). With respect to regulation, the protein lactyltransferase activity is inhibited by beta-alanine. In terms of biological role, catalyzes the attachment of alanine to tRNA(Ala) in a two-step reaction: alanine is first activated by ATP to form Ala-AMP and then transferred to the acceptor end of tRNA(Ala). Also edits incorrectly charged tRNA(Ala) via its editing domain. In presence of high levels of lactate, also acts as a protein lactyltransferase that mediates lactylation of lysine residues in target proteins, such as TEAD1, TP53/p53 and YAP1. Protein lactylation takes place in a two-step reaction: lactate is first activated by ATP to form lactate-AMP and then transferred to lysine residues of target proteins. Acts as an inhibitor of TP53/p53 activity by catalyzing lactylation of TP53/p53. Acts as a positive regulator of the Hippo pathway by mediating lactylation of TEAD1 and YAP1. This chain is Alanine--tRNA ligase, cytoplasmic (AARS1), found in Pongo abelii (Sumatran orangutan).